A 79-amino-acid polypeptide reads, in one-letter code: uncharacterized protein (79 aa).

Residues 20-52 (TERGAGLSPAAPPDPSPAIAPTMAEGGVPSPGP) form a disordered region.

This is an uncharacterized protein from Homo sapiens (Human).